Consider the following 223-residue polypeptide: Deoxyribose-phosphate aldolase (223 aa).

Aspartate 91 serves as the catalytic Proton donor/acceptor. Lysine 153 serves as the catalytic Schiff-base intermediate with acetaldehyde. Lysine 182 functions as the Proton donor/acceptor in the catalytic mechanism.

Belongs to the DeoC/FbaB aldolase family. DeoC type 1 subfamily.

The protein resides in the cytoplasm. It catalyses the reaction 2-deoxy-D-ribose 5-phosphate = D-glyceraldehyde 3-phosphate + acetaldehyde. Its pathway is carbohydrate degradation; 2-deoxy-D-ribose 1-phosphate degradation; D-glyceraldehyde 3-phosphate and acetaldehyde from 2-deoxy-alpha-D-ribose 1-phosphate: step 2/2. Its function is as follows. Catalyzes a reversible aldol reaction between acetaldehyde and D-glyceraldehyde 3-phosphate to generate 2-deoxy-D-ribose 5-phosphate. This Streptococcus pyogenes serotype M2 (strain MGAS10270) protein is Deoxyribose-phosphate aldolase.